A 692-amino-acid chain; its full sequence is Potassium-transporting ATPase ATP-binding subunit (692 aa).

Helical transmembrane passes span 50-70 (PIMF…FLPS), 77-97 (GWFN…ANFA), 240-260 (LTLI…YLGF), and 266-286 (VLVA…LSAI). Catalysis depends on D319, which acts as the 4-aspartylphosphate intermediate. Residues D356, E360, 388-395 (FKAETRMS), and K407 contribute to the ATP site. Residues D530 and D534 each coordinate Mg(2+). The next 3 helical transmembrane spans lie at 600–620 (FAII…LNIM), 628–648 (AILS…PLAM), and 672–692 (GGVI…GLFI).

The protein belongs to the cation transport ATPase (P-type) (TC 3.A.3) family. Type IA subfamily. As to quaternary structure, the system is composed of three essential subunits: KdpA, KdpB and KdpC.

Its subcellular location is the cell membrane. It catalyses the reaction K(+)(out) + ATP + H2O = K(+)(in) + ADP + phosphate + H(+). Part of the high-affinity ATP-driven potassium transport (or Kdp) system, which catalyzes the hydrolysis of ATP coupled with the electrogenic transport of potassium into the cytoplasm. This subunit is responsible for energy coupling to the transport system and for the release of the potassium ions to the cytoplasm. In Bacillus cereus (strain 03BB102), this protein is Potassium-transporting ATPase ATP-binding subunit.